A 397-amino-acid polypeptide reads, in one-letter code: uncharacterized protein (397 aa).

The next 11 helical transmembrane spans lie at 9–29 (NAVLGAAFLMATSAIGPGFLT), 38–58 (LLASFGFVILLSILLDIGAQL), 85–105 (FLAALIVMGGLAFNIGNVGGA), 112–132 (IFGIAPEMGAVISGIIAILIF), 148–168 (MGFIMVVLTFYVMFKTEPPVV), 182–202 (PIAIVTLVGGTVGGYITFAGA), 226–246 (AILIASTMRVVLFLAVLGVVS), 271–291 (VLFGVVIWAASVTSVIGAAYT), 310–330 (WIIAFIVISTVVLVTVGKPAA), 331–351 (VLVFVGTLNGLILPIALALIL), and 365–385 (HPVFLAFSGWFVVIIMAILSG).

Belongs to the NRAMP family.

The protein localises to the cell membrane. This is an uncharacterized protein from Haemophilus influenzae (strain ATCC 51907 / DSM 11121 / KW20 / Rd).